A 436-amino-acid chain; its full sequence is Gamma-glutamyl phosphate reductase (436 aa).

It belongs to the gamma-glutamyl phosphate reductase family.

It localises to the cytoplasm. The enzyme catalyses L-glutamate 5-semialdehyde + phosphate + NADP(+) = L-glutamyl 5-phosphate + NADPH + H(+). Its pathway is amino-acid biosynthesis; L-proline biosynthesis; L-glutamate 5-semialdehyde from L-glutamate: step 2/2. Catalyzes the NADPH-dependent reduction of L-glutamate 5-phosphate into L-glutamate 5-semialdehyde and phosphate. The product spontaneously undergoes cyclization to form 1-pyrroline-5-carboxylate. This chain is Gamma-glutamyl phosphate reductase, found in Prochlorococcus marinus (strain MIT 9515).